Here is a 324-residue protein sequence, read N- to C-terminus: Heat-inducible transcription repressor HrcA (324 aa).

It belongs to the HrcA family.

Functionally, negative regulator of class I heat shock genes (grpE-dnaK-dnaJ and groELS operons). Prevents heat-shock induction of these operons. This chain is Heat-inducible transcription repressor HrcA, found in Synechococcus sp. (strain CC9902).